Consider the following 142-residue polypeptide: Phosphoribosyl-AMP cyclohydrolase (142 aa).

D92 is a binding site for Mg(2+). Zn(2+) is bound at residue C93. Mg(2+) is bound by residues D94 and D96. Zn(2+) is bound by residues C109 and C116.

The protein belongs to the PRA-CH family. Homodimer. The cofactor is Mg(2+). It depends on Zn(2+) as a cofactor.

The protein resides in the cytoplasm. The catalysed reaction is 1-(5-phospho-beta-D-ribosyl)-5'-AMP + H2O = 1-(5-phospho-beta-D-ribosyl)-5-[(5-phospho-beta-D-ribosylamino)methylideneamino]imidazole-4-carboxamide. It functions in the pathway amino-acid biosynthesis; L-histidine biosynthesis; L-histidine from 5-phospho-alpha-D-ribose 1-diphosphate: step 3/9. Catalyzes the hydrolysis of the adenine ring of phosphoribosyl-AMP. The polypeptide is Phosphoribosyl-AMP cyclohydrolase (Halorhodospira halophila (strain DSM 244 / SL1) (Ectothiorhodospira halophila (strain DSM 244 / SL1))).